Here is a 187-residue protein sequence, read N- to C-terminus: Probable DNA-directed RNA polymerase subunit delta (187 aa).

Positions 14–81 (LSMIEVAHAL…GNNVWALRSW (68 aa)) constitute an HTH HARE-type domain. A disordered region spans residues 96–187 (EIEDEEEEKP…EDDSDDTDED (92 aa)). Acidic residues-rich tracts occupy residues 117–149 (IEDEIDPEDEEGTKETTEEDMSYDTQAEDEDKD) and 157–187 (ELAEVELDNVDEEVDIELEDDEDDSDDTDED).

Belongs to the RpoE family. As to quaternary structure, RNAP is composed of a core of 2 alpha, a beta and a beta' subunits. The core is associated with a delta subunit and one of several sigma factors.

Functionally, participates in both the initiation and recycling phases of transcription. In the presence of the delta subunit, RNAP displays an increased specificity of transcription, a decreased affinity for nucleic acids, and an increased efficiency of RNA synthesis because of enhanced recycling. The sequence is that of Probable DNA-directed RNA polymerase subunit delta from Lactococcus lactis subsp. cremoris (strain SK11).